The primary structure comprises 58 residues: Attractin (58 aa).

3 disulfides stabilise this stretch: Cys-4–Cys-41, Cys-13–Cys-33, and Cys-20–Cys-26. N-linked (GlcNAc...) asparagine glycosylation occurs at Asn-8.

In terms of tissue distribution, produced by the albumen gland of the egg cordons.

It is found in the secreted. In terms of biological role, water-borne pheromone that attract the marine mollusk Aplysia into breeding aggregations and coordinate male and female reproductive behavior within the aggregation. The protein is Attractin (ATT) of Aplysia fasciata (Mottled sea hare).